The sequence spans 447 residues: MTTILKHLPVGQRIGIAFSGGLDTSAALLWMRQKGAVPYAYTANLGQPDEEDYDAIPRRAMEYGAENARLIDCRKQLVAEGIAAIQCGAFHNTTGGLTYFNTTPLGRAVTGTMLVAAMKEDGVNIWGDGSTYKGNDIERFYRYGLLTNAELQIYKPWLDTDFIDELGGRHEMSEFMIACGFDYKMSVEKAYSTDSNMLGATHEAKDLEYLNSSVKIVNPIMGVKFWDESVKIPAEEVTVRFEQGHPVALNGKTFSDDVEMMLEANRIGGRHGLGMSDQIENRIIEAKSRGIYEAPGMALLHIAYERLLTGIHNEDTIEQYHAHGRQLGRLLYQGRWFDSQALMLRDSLQRWVASQITGEVTLELRRGNDYSILNTVSENLTYKPERLTMEKGDSVFSPDDRIGQLTMRNLDITDTREKLFGYAKTGLLSSSAASGVPQVENLENKGQ.

Residues 17–25 (AFSGGLDTS) and A43 each bind ATP. Y99 contacts L-citrulline. The ATP site is built by G129 and T131. The L-aspartate site is built by T131, N135, and D136. Position 135 (N135) interacts with L-citrulline. D136 contacts ATP. Positions 139 and 192 each coordinate L-citrulline. An ATP-binding site is contributed by D194. The L-citrulline site is built by T201, E203, and E280.

The protein belongs to the argininosuccinate synthase family. Type 2 subfamily. Homotetramer.

The protein localises to the cytoplasm. The enzyme catalyses L-citrulline + L-aspartate + ATP = 2-(N(omega)-L-arginino)succinate + AMP + diphosphate + H(+). Its pathway is amino-acid biosynthesis; L-arginine biosynthesis; L-arginine from L-ornithine and carbamoyl phosphate: step 2/3. This Escherichia coli (strain K12 / MC4100 / BW2952) protein is Argininosuccinate synthase.